Reading from the N-terminus, the 317-residue chain is Ribose-phosphate pyrophosphokinase (317 aa).

Residues 43–45 (DGE) and 102–103 (RQ) contribute to the ATP site. The Mg(2+) site is built by His136 and Asp175. Lys198 is an active-site residue. D-ribose 5-phosphate-binding positions include Arg200, Asp224, and 228-232 (DTAGT).

This sequence belongs to the ribose-phosphate pyrophosphokinase family. Class I subfamily. Homohexamer. Requires Mg(2+) as cofactor.

It localises to the cytoplasm. The enzyme catalyses D-ribose 5-phosphate + ATP = 5-phospho-alpha-D-ribose 1-diphosphate + AMP + H(+). It functions in the pathway metabolic intermediate biosynthesis; 5-phospho-alpha-D-ribose 1-diphosphate biosynthesis; 5-phospho-alpha-D-ribose 1-diphosphate from D-ribose 5-phosphate (route I): step 1/1. Involved in the biosynthesis of the central metabolite phospho-alpha-D-ribosyl-1-pyrophosphate (PRPP) via the transfer of pyrophosphoryl group from ATP to 1-hydroxyl of ribose-5-phosphate (Rib-5-P). The sequence is that of Ribose-phosphate pyrophosphokinase from Corynebacterium ammoniagenes (Brevibacterium ammoniagenes).